Here is an 80-residue protein sequence, read N- to C-terminus: Cell division protein ZapB (80 aa).

Residues 3 to 80 (LEILEQLEAK…GLLGKMEEVE (78 aa)) adopt a coiled-coil conformation. A disordered region spans residues 41–62 (LEQANNGRSEVEQEAQKARDEQ). Basic and acidic residues predominate over residues 49 to 62 (SEVEQEAQKARDEQ).

Belongs to the ZapB family. As to quaternary structure, homodimer. The ends of the coiled-coil dimer bind to each other, forming polymers. Interacts with FtsZ.

It localises to the cytoplasm. In terms of biological role, non-essential, abundant cell division factor that is required for proper Z-ring formation. It is recruited early to the divisome by direct interaction with FtsZ, stimulating Z-ring assembly and thereby promoting cell division earlier in the cell cycle. Its recruitment to the Z-ring requires functional FtsA or ZipA. The protein is Cell division protein ZapB of Aliivibrio salmonicida (strain LFI1238) (Vibrio salmonicida (strain LFI1238)).